A 664-amino-acid chain; its full sequence is Intraflagellar transport protein 70A (664 aa).

TPR repeat units lie at residues 11 to 44 (DGEF…SPRS), 45 to 78 (RAGL…HPEL), 153 to 186 (LDGQ…SGYR), 188 to 220 (DLSY…GIRQ), 392 to 423 (LTKQ…EKYI), 424 to 456 (PVLM…CNDH), and 458 to 491 (VWKL…HYDN). Residues 507 to 534 (YIMTSQNEEAEELMRKIEKEEEQLSYDD) adopt a coiled-coil conformation. Residues 543 to 576 (CIVNLVIGTLYCAKGNYDFGISRVIKSLEPYNKK) form a TPR 8 repeat.

This sequence belongs to the TTC30/dfy-1/fleer family.

Its subcellular location is the cell projection. The protein localises to the cilium. In terms of biological role, required for polyglutamylation of axonemal tubulin. Plays a role in anterograde intraflagellar transport (IFT), the process by which cilia precursors are transported from the base of the cilium to the site of their incorporation at the tip. The polypeptide is Intraflagellar transport protein 70A (IFT70A) (Bos taurus (Bovine)).